A 477-amino-acid polypeptide reads, in one-letter code: Exodeoxyribonuclease 7 large subunit (477 aa).

Residues 456 to 477 (GGTVAPRKAPPKKPGGGQGSLL) are disordered.

This sequence belongs to the XseA family. In terms of assembly, heterooligomer composed of large and small subunits.

It is found in the cytoplasm. It catalyses the reaction Exonucleolytic cleavage in either 5'- to 3'- or 3'- to 5'-direction to yield nucleoside 5'-phosphates.. Bidirectionally degrades single-stranded DNA into large acid-insoluble oligonucleotides, which are then degraded further into small acid-soluble oligonucleotides. In Parvibaculum lavamentivorans (strain DS-1 / DSM 13023 / NCIMB 13966), this protein is Exodeoxyribonuclease 7 large subunit.